We begin with the raw amino-acid sequence, 95 residues long: FXYD domain-containing ion transport regulator 6 (95 aa).

A signal peptide spans 1–18; the sequence is MEVVLLFLCGLLAPAVLA. The Extracellular portion of the chain corresponds to 19-35; the sequence is SATEQEKEKDPFHYDYQ. Residues 36 to 58 traverse the membrane as a helical segment; that stretch reads TLRIGGLVFAVVLFSVGILLILS. Topologically, residues 59-95 are cytoplasmic; it reads RRCKCSFNQKPRAPGDEEAQVENLVTANATEPQKAEN. Residues 69 to 95 form a disordered region; the sequence is PRAPGDEEAQVENLVTANATEPQKAEN.

The protein belongs to the FXYD family. As to quaternary structure, regulatory subunit of the sodium/potassium-transporting ATPase which is composed of a catalytic alpha subunit, a non-catalytic beta subunit and an additional regulatory subunit. The regulatory subunit, a member of the FXYD protein family, modulates the enzymatic activity in a tissue- and isoform-specific way by changing affinities of the Na+/K+-ATPase toward Na(+), K(+) or ATP.

It localises to the cell membrane. Associates with and regulates the activity of the sodium/potassium-transporting ATPase (NKA) which catalyzes the hydrolysis of ATP coupled with the exchange of Na(+) and K(+) ions across the plasma membrane. Reduces the apparent affinity for intracellular Na(+) with no change in the apparent affinity for extracellular K(+). In addition to modulating NKA kinetics, may also function as a regulator of NKA localization to the plasma membrane. The sequence is that of FXYD domain-containing ion transport regulator 6 (FXYD6) from Bos taurus (Bovine).